An 81-amino-acid chain; its full sequence is U12-hexatoxin-Mg1a (81 aa).

Residues 1 to 24 (MKAPATIVILIMSLISVLWATADT) form the signal peptide. Residues 25 to 50 (EDGNLLFPIEDFIRKFDEYPVQPKER) constitute a propeptide that is removed on maturation. 3 disulfide bridges follow: Cys52–Cys66, Cys59–Cys71, and Cys65–Cys75. A Proline amide modification is found at Pro78.

As to expression, expressed by the venom gland.

The protein localises to the secreted. Blocks voltage-gated sodium channels (Nav). Intracranial injection into mice causes lacrimation, slow breathing and death. Intrathorax injection into crickets causes death. In Macrothele gigas (Japanese funnel web spider), this protein is U12-hexatoxin-Mg1a.